The sequence spans 210 residues: Protein SYM1 (210 aa).

4 consecutive transmembrane segments (helical) span residues 22–39 (IMTG…QLLF), 68–84 (AVVY…DRWY), 112–129 (LGFA…MSLL), and 173–189 (LLAA…FLSY).

This sequence belongs to the peroxisomal membrane protein PXMP2/4 family.

The protein localises to the mitochondrion inner membrane. Functionally, may be involved in cellular response to stress. Required to maintain mitochondrial DNA (mtDNA) integrity and stability. The sequence is that of Protein SYM1 (SYM1) from Candida glabrata (strain ATCC 2001 / BCRC 20586 / JCM 3761 / NBRC 0622 / NRRL Y-65 / CBS 138) (Yeast).